The sequence spans 1035 residues: Tyrosine-protein kinase-like otk (1035 aa).

An N-terminal signal peptide occupies residues 1–23 (MDMDVMMISMCILASTLMAPGWA). 5 Ig-like C2-type domains span residues 24–109 (STSG…REAS), 110–199 (PPAK…RVMS), 251–365 (PEDL…APLN), 368–464 (PGLL…VSIN), and 469–559 (PKFS…VQLV). The Extracellular portion of the chain corresponds to 24–582 (STSGFLRVPQ…GGDGFLVTRA (559 aa)). Intrachain disulfides connect C47-C96, C138-C188, C276-C354, C399-C448, and C491-C543. N-linked (GlcNAc...) asparagine glycans are attached at residues N336, N418, N430, N445, N513, and N525. The helical transmembrane segment at 583-603 (VLITMTVALAYIVLVVGLMLW) threads the bilayer. The Cytoplasmic segment spans residues 604 to 1035 (CRYRRQARKA…SKAMQSVAEK (432 aa)). Disordered regions lie at residues 623–683 (AGGD…KSVY) and 721–775 (AQSD…KEEE). A compositionally biased stretch (polar residues) spans 658-676 (KSNGDAQKSDDTACSQQSR). Phosphoserine is present on S681. A Protein kinase; inactive domain is found at 693–1029 (LSELLQIGRG…QLGSALSKAM (337 aa)). The span at 723–734 (SDKDADTEKQHS) shows a compositional bias: basic and acidic residues. Acidic residues predominate over residues 766–775 (DDIEEIKEEE).

Belongs to the protein kinase superfamily. Tyr protein kinase family. Insulin receptor subfamily. As to quaternary structure, interacts with plexA; component of a receptor complex that mediates the repulsive signaling in response to Semaphorin ligands.

The protein resides in the cell membrane. Its function is as follows. Acts as a calcium-dependent, homophilic cell adhesion molecule that regulates neural recognition during the development of the nervous system. Component of the repulsive Plexin signaling response to regulate motor axon guidance at the embryonic stage. Also component of a receptor complex that is required in the adult visual system to innervate the lamina layer; specific targeting of R1-R6 axons. This chain is Tyrosine-protein kinase-like otk, found in Drosophila persimilis (Fruit fly).